A 308-amino-acid polypeptide reads, in one-letter code: Homoserine O-acetyltransferase (308 aa).

C142 acts as the Acyl-thioester intermediate in catalysis. The substrate site is built by K163 and S192. H235 (proton acceptor) is an active-site residue. E237 is a catalytic residue. R249 is a substrate binding site.

Belongs to the MetA family.

The protein localises to the cytoplasm. It catalyses the reaction L-homoserine + acetyl-CoA = O-acetyl-L-homoserine + CoA. It participates in amino-acid biosynthesis; L-methionine biosynthesis via de novo pathway; O-acetyl-L-homoserine from L-homoserine: step 1/1. In terms of biological role, transfers an acetyl group from acetyl-CoA to L-homoserine, forming acetyl-L-homoserine. The polypeptide is Homoserine O-acetyltransferase (Rhizobium rhizogenes (strain K84 / ATCC BAA-868) (Agrobacterium radiobacter)).